The sequence spans 868 residues: mRNA-capping enzyme (868 aa).

Lys-282 (N6-GMP-lysine intermediate) is an active-site residue. Residues 594–868 (GIYRAQTALI…LFGFICLRKN (275 aa)) form the mRNA cap 0 methyltransferase domain. Residues Lys-607, Gly-624, Asp-646, and 710 to 712 (LFI) contribute to the S-adenosyl-L-methionine site.

In the N-terminal section; belongs to the dsDNA virus mRNA guanylyltransferase family. This sequence in the C-terminal section; belongs to the class I-like SAM-binding methyltransferase superfamily. mRNA cap 0 methyltransferase family. In terms of assembly, part of the viral DNA-directed RNA polymerase that consists of 8 polII-like subunits (RPB1, RPB2, RPB3, RPB5, RPB6, RPB7, RPB9, RPB10), a capping enzyme and a termination factor.

It is found in the virion. The catalysed reaction is a 5'-end triphospho-ribonucleoside in mRNA + H2O = a 5'-end diphospho-ribonucleoside in mRNA + phosphate + H(+). It carries out the reaction a 5'-end diphospho-ribonucleoside in mRNA + GTP + H(+) = a 5'-end (5'-triphosphoguanosine)-ribonucleoside in mRNA + diphosphate. The enzyme catalyses a 5'-end (5'-triphosphoguanosine)-ribonucleoside in mRNA + S-adenosyl-L-methionine = a 5'-end (N(7)-methyl 5'-triphosphoguanosine)-ribonucleoside in mRNA + S-adenosyl-L-homocysteine. It participates in mRNA processing; mRNA capping. In terms of biological role, probably catalyzes the second reaction in the mRNA cap formation pathway. Forms a covalent complex with GTP. This is mRNA-capping enzyme from Ornithodoros (relapsing fever ticks).